Consider the following 265-residue polypeptide: Type III pantothenate kinase (265 aa).

6–13 (DVGNTNIV) is an ATP binding site. Substrate-binding positions include Tyr100 and 107–110 (GADR). The active-site Proton acceptor is Asp109. K(+) is bound at residue Asp129. Thr132 is an ATP binding site. A substrate-binding site is contributed by Thr184.

Belongs to the type III pantothenate kinase family. Homodimer. Requires NH4(+) as cofactor. K(+) serves as cofactor.

The protein localises to the cytoplasm. It carries out the reaction (R)-pantothenate + ATP = (R)-4'-phosphopantothenate + ADP + H(+). The protein operates within cofactor biosynthesis; coenzyme A biosynthesis; CoA from (R)-pantothenate: step 1/5. Its function is as follows. Catalyzes the phosphorylation of pantothenate (Pan), the first step in CoA biosynthesis. The polypeptide is Type III pantothenate kinase (Alkaliphilus oremlandii (strain OhILAs) (Clostridium oremlandii (strain OhILAs))).